The following is a 291-amino-acid chain: Bis(5'-nucleosyl)-tetraphosphatase, symmetrical (291 aa).

Belongs to the Ap4A hydrolase family.

The enzyme catalyses P(1),P(4)-bis(5'-adenosyl) tetraphosphate + H2O = 2 ADP + 2 H(+). Hydrolyzes diadenosine 5',5'''-P1,P4-tetraphosphate to yield ADP. This Coxiella burnetii (strain CbuK_Q154) (Coxiella burnetii (strain Q154)) protein is Bis(5'-nucleosyl)-tetraphosphatase, symmetrical.